A 210-amino-acid chain; its full sequence is Imidazole glycerol phosphate synthase subunit HisH (210 aa).

Residues 3–208 (PIAIIDYGMG…GELVRHAGNA (206 aa)) enclose the Glutamine amidotransferase type-1 domain. C81 acts as the Nucleophile in catalysis. Active-site residues include H183 and E185.

Heterodimer of HisH and HisF.

Its subcellular location is the cytoplasm. It catalyses the reaction 5-[(5-phospho-1-deoxy-D-ribulos-1-ylimino)methylamino]-1-(5-phospho-beta-D-ribosyl)imidazole-4-carboxamide + L-glutamine = D-erythro-1-(imidazol-4-yl)glycerol 3-phosphate + 5-amino-1-(5-phospho-beta-D-ribosyl)imidazole-4-carboxamide + L-glutamate + H(+). It carries out the reaction L-glutamine + H2O = L-glutamate + NH4(+). It participates in amino-acid biosynthesis; L-histidine biosynthesis; L-histidine from 5-phospho-alpha-D-ribose 1-diphosphate: step 5/9. Its function is as follows. IGPS catalyzes the conversion of PRFAR and glutamine to IGP, AICAR and glutamate. The HisH subunit catalyzes the hydrolysis of glutamine to glutamate and ammonia as part of the synthesis of IGP and AICAR. The resulting ammonia molecule is channeled to the active site of HisF. In Moorella thermoacetica (strain ATCC 39073 / JCM 9320), this protein is Imidazole glycerol phosphate synthase subunit HisH.